Here is a 207-residue protein sequence, read N- to C-terminus: Outer-membrane lipoprotein LolB (207 aa).

A signal peptide spans 1–21 (MPMRKRHFYRLLPLASLLLAA). A lipid anchor (N-palmitoyl cysteine) is attached at Cys-22. Cys-22 carries S-diacylglycerol cysteine lipidation.

It belongs to the LolB family. As to quaternary structure, monomer.

Its subcellular location is the cell outer membrane. Its function is as follows. Plays a critical role in the incorporation of lipoproteins in the outer membrane after they are released by the LolA protein. The sequence is that of Outer-membrane lipoprotein LolB from Yersinia pseudotuberculosis serotype IB (strain PB1/+).